A 196-amino-acid polypeptide reads, in one-letter code: Nucleoside triphosphate pyrophosphatase (196 aa).

D73 acts as the Proton acceptor in catalysis.

The protein belongs to the Maf family. Requires a divalent metal cation as cofactor.

The protein localises to the cytoplasm. The catalysed reaction is a ribonucleoside 5'-triphosphate + H2O = a ribonucleoside 5'-phosphate + diphosphate + H(+). It catalyses the reaction a 2'-deoxyribonucleoside 5'-triphosphate + H2O = a 2'-deoxyribonucleoside 5'-phosphate + diphosphate + H(+). Functionally, nucleoside triphosphate pyrophosphatase. May have a dual role in cell division arrest and in preventing the incorporation of modified nucleotides into cellular nucleic acids. The protein is Nucleoside triphosphate pyrophosphatase of Chlamydia pneumoniae (Chlamydophila pneumoniae).